The following is a 473-amino-acid chain: Suppressor of SWI4 1 homolog (473 aa).

In terms of domain architecture, Brix spans 29–292 (PHSFVFTRGC…LIKVQEGVGE (264 aa)). Residues serine 238 and serine 240 each carry the phosphoserine modification. Positions 323-473 (AQRQAQQAQN…GRGRPGKRVA (151 aa)) are disordered. A compositionally biased stretch (low complexity) spans 324-334 (QRQAQQAQNVQ). Residues 335–352 (RKQEQREAHRKKSLEGMK) are compositionally biased toward basic and acidic residues. The residue at position 359 (serine 359) is a Phosphoserine. A compositionally biased stretch (acidic residues) spans 375 to 388 (LGEDDDEQEDDDIE). Basic residues predominate over residues 409-421 (KRLAKSPGRKRKR). Residues 422–443 (WEMDRGRGRLCDQKFPKTKDKS) show a composition bias toward basic and acidic residues. An N6-acetyllysine modification is found at lysine 438. Over residues 462-473 (GRGRGRPGKRVA) the composition is skewed to basic residues.

Widely expressed.

The protein resides in the nucleus. It is found in the nucleolus. Functionally, may have a role in cell growth. In Homo sapiens (Human), this protein is Suppressor of SWI4 1 homolog (PPAN).